The sequence spans 181 residues: 28 kDa heat- and acid-stable phosphoprotein (181 aa).

Residues 1 to 14 (MPKGGRKGGHKGRA) are compositionally biased toward basic residues. Positions 1-117 (MPKGGRKGGH…SRREREEIEK (117 aa)) are disordered. Phosphothreonine is present on Thr18. At Ser19 the chain carries Phosphoserine. A compositionally biased stretch (basic and acidic residues) spans 30–59 (EKQKAREEEEQKEGGDGAAGDPKKEKKSLD). Residue Lys52 forms a Glycyl lysine isopeptide (Lys-Gly) (interchain with G-Cter in SUMO2) linkage. Phosphoserine occurs at positions 57, 60, and 63. A compositionally biased stretch (acidic residues) spans 60–69 (SDESEDEEDD). Tyr70 is subject to Phosphotyrosine. Residues 102–117 (DGPKELSRREREEIEK) are compositionally biased toward basic and acidic residues. Lys126 is modified (N6-methyllysine). An N6-acetyllysine mark is found at Lys132 and Lys164. Over residues 151 to 167 (EEAARKKEEERKAKDDA) the composition is skewed to basic and acidic residues. Residues 151–181 (EEAARKKEEERKAKDDATLSGKRMQSLSLNK) form a disordered region. 2 positions are modified to phosphoserine: Ser176 and Ser178.

Belongs to the PDAP1 family.

Enhances PDGFA-stimulated cell growth in fibroblasts, but inhibits the mitogenic effect of PDGFB. This chain is 28 kDa heat- and acid-stable phosphoprotein (PDAP1), found in Homo sapiens (Human).